A 471-amino-acid chain; its full sequence is UDP-N-acetylmuramate--L-alanine ligase (471 aa).

114-120 contacts ATP; the sequence is GTHGKTT.

This sequence belongs to the MurCDEF family.

Its subcellular location is the cytoplasm. The catalysed reaction is UDP-N-acetyl-alpha-D-muramate + L-alanine + ATP = UDP-N-acetyl-alpha-D-muramoyl-L-alanine + ADP + phosphate + H(+). It participates in cell wall biogenesis; peptidoglycan biosynthesis. In terms of biological role, cell wall formation. This Methylobacterium nodulans (strain LMG 21967 / CNCM I-2342 / ORS 2060) protein is UDP-N-acetylmuramate--L-alanine ligase.